Here is a 569-residue protein sequence, read N- to C-terminus: Proline--tRNA ligase (569 aa).

It belongs to the class-II aminoacyl-tRNA synthetase family. ProS type 1 subfamily. In terms of assembly, homodimer.

The protein resides in the cytoplasm. The catalysed reaction is tRNA(Pro) + L-proline + ATP = L-prolyl-tRNA(Pro) + AMP + diphosphate. Its function is as follows. Catalyzes the attachment of proline to tRNA(Pro) in a two-step reaction: proline is first activated by ATP to form Pro-AMP and then transferred to the acceptor end of tRNA(Pro). As ProRS can inadvertently accommodate and process non-cognate amino acids such as alanine and cysteine, to avoid such errors it has two additional distinct editing activities against alanine. One activity is designated as 'pretransfer' editing and involves the tRNA(Pro)-independent hydrolysis of activated Ala-AMP. The other activity is designated 'posttransfer' editing and involves deacylation of mischarged Ala-tRNA(Pro). The misacylated Cys-tRNA(Pro) is not edited by ProRS. The chain is Proline--tRNA ligase from Campylobacter jejuni (strain RM1221).